The primary structure comprises 1866 residues: Protein strawberry notch homolog (1866 aa).

Low complexity predominate over residues 19–28 (QQSSPTPSTS). Disordered regions lie at residues 19–63 (QQSS…HSSS), 132–151 (TAPTVNQSEPSTPTVTIVPK), 156–253 (LFET…GLPI), 561–581 (GMASPRLQTTPQPLTKSQKAK), and 1112–1308 (GLSG…ARGS). Composition is skewed to polar residues over residues 37 to 63 (QSFSNNTHTPSVSQFFDETSNDSHSSS) and 134 to 146 (PTVNQSEPSTPTV). Positions 161-176 (TADSPTPSGDTSTTAS) are enriched in low complexity. Polar residues-rich tracts occupy residues 191-203 (DRQNPMFVQTARS) and 210-228 (TPSTSATVSPHITSSLTQR). The span at 229–239 (SHTSSPASSAS) shows a compositional bias: low complexity. Residues 566–577 (RLQTTPQPLTKS) are compositionally biased toward polar residues. Positions 1112-1126 (GLSGIGRSSMSSSTG) are enriched in low complexity. Residues 1142–1152 (DGSDDEVENDM) show a composition bias toward acidic residues. Positions 1164–1177 (ESAREEAEGARTLE) are enriched in basic and acidic residues. Residues 1194 to 1213 (SSSDDSDEEVVKDEDEDEEA) are compositionally biased toward acidic residues. Composition is skewed to basic and acidic residues over residues 1262–1281 (RDEEEAERLREKVRKREERR) and 1290–1304 (RRAEREKQRRNEELQ).

This sequence belongs to the SBNO family. In terms of tissue distribution, expressed in the somatic gonad, neurons, hypodermal cells, seam cells, the excretory system, and intestinal cells (at protein level).

Its subcellular location is the nucleus. In terms of biological role, transcriptional activator that functions upstream of the let-60/Ras and let-23/EGFR signaling pathways to positively regulate lin-3 expression and thereby promote vulval induction. Plays a role in excretory duct development. Plays a role in male tail development. The protein is Protein strawberry notch homolog of Caenorhabditis elegans.